Reading from the N-terminus, the 168-residue chain is Cofilin-1-B (168 aa).

An N-acetylalanine modification is found at Ala2. An ADF-H domain is found at 4–153 (GVMVSDDVVK…NDPCNLADKL (150 aa)). Residues 30-34 (KKRKK) carry the Nuclear localization signal motif.

It belongs to the actin-binding proteins ADF family. In terms of processing, inactive when phosphorylated. Phosphorylation levels vary during development. Oocytes contain only the phosphorylated form, and 80-95% of cfl1 protein is phosphorylated in unfertilized eggs. Rapid dephosphorylation occurs within 30 minutes after fertilization. Phosphorylation levels increase again between the morula and blastula stages (5-8 hpf) and then decrease again as gastrulation approaches. Dephosphorylated by pdxp. In terms of tissue distribution, expressed diffusely in both animal and vegetal hemispheres of the oocyte. During cleavage, expression accumulates around the cleavage furrow, along the vegetal membrane, and later in the midbody. Strongly expressed in the animal hemisphere during blastula stages, with most cells showing expression by gastrulation. By stage 17, expression is highest in cells of the developing neuroectoderm, and at stage 24 the notochord, neural tube, neural crest, somites and some cells of the archenteron show high expression. By stage 35, expression has declined in the notochord, but remains in the neural tube, epidermis and a layer of cells in the archenteron. Also highly expressed in the retina and neuronal cell bodies at the base of the cement gland but not the cement gland itself. At stage 38, expression is widespread, being highest in the nervous system and retina. In the adult, expression is high in the brain, heart, oocyte, stomach, and low in skeletal muscle.

The protein resides in the nucleus matrix. It localises to the cytoplasm. It is found in the cytoskeleton. The protein localises to the cell cortex. Its subcellular location is the membrane. In terms of biological role, may play a role in the regulation of cell morphology and cytoskeletal organization. Binds to F-actin and exhibits pH-sensitive F-actin depolymerizing activity. Required for formation of the cleavage furrow during cytokinesis. The polypeptide is Cofilin-1-B (cfl1-b) (Xenopus laevis (African clawed frog)).